Here is a 396-residue protein sequence, read N- to C-terminus: Decapping nuclease RAI1 (396 aa).

107-109 lines the substrate pocket; it reads YRG. Residue Glu179 participates in a divalent metal cation binding. Glu228 is a binding site for substrate. Positions 230, 249, and 250 each coordinate a divalent metal cation. Positions 251 and 275 each coordinate substrate.

This sequence belongs to the DXO/Dom3Z family. As to quaternary structure, interacts with RAT1; the interaction is direct, stabilizes RAT1 protein structure and stimulates its exoribonuclease activity. The interaction also stimulates RAI1 pyrophosphohydrolase activity, probably by recruiting it to mRNA substrates. It depends on a divalent metal cation as a cofactor.

It localises to the nucleus. The catalysed reaction is a 5'-end NAD(+)-phospho-ribonucleoside in mRNA + H2O = a 5'-end phospho-ribonucleoside in mRNA + NAD(+) + H(+). It catalyses the reaction a 5'-end (N(7)-methyl 5'-triphosphoguanosine)-ribonucleoside-ribonucleotide in mRNA + H2O = a (N(7)-methyl 5'-triphosphoguanosine)-nucleoside + a 5'-end phospho-ribonucleoside in mRNA + H(+). The enzyme catalyses a 5'-end triphospho-ribonucleoside in mRNA + H2O = a 5'-end phospho-ribonucleoside in mRNA + diphosphate + H(+). Decapping enzyme for NAD-capped RNAs: specifically hydrolyzes the nicotinamide adenine dinucleotide (NAD) cap from a subset of RNAs by removing the entire NAD moiety from the 5'-end of an NAD-capped RNA. The NAD-cap is present at the 5'-end of some RNAs and snoRNAs. In contrast to the canonical 5'-end N7 methylguanosine (m7G) cap, the NAD cap promotes mRNA decay. Also acts as a non-canonical decapping enzyme that removes the entire cap structure of m7G capped or incompletely capped RNAs. Has decapping activity toward incomplete 5'-end m7G cap mRNAs such as unmethylated 5'-end-capped RNA (cap0), while it has no activity toward 2'-O-ribose methylated m7G cap (cap1). Also possesses RNA 5'-pyrophosphohydrolase activity by hydrolyzing the 5'-end triphosphate to release pyrophosphates. Stimulates exoribonuclease activity of Rat1, allowing it to degrade RNAs with stable secondary structure more effectively. This Scheffersomyces stipitis (strain ATCC 58785 / CBS 6054 / NBRC 10063 / NRRL Y-11545) (Yeast) protein is Decapping nuclease RAI1.